A 388-amino-acid chain; its full sequence is Succinate--CoA ligase [ADP-forming] subunit beta (388 aa).

The region spanning 9–244 (KQLFAEYGLP…PSQDDPREAH (236 aa)) is the ATP-grasp domain. Residues Lys-46, 53-55 (GRG), Glu-99, Thr-102, and Glu-107 each bind ATP. 2 residues coordinate Mg(2+): Asn-199 and Asp-213. Residues Asn-264 and 321-323 (GIV) each bind substrate.

This sequence belongs to the succinate/malate CoA ligase beta subunit family. As to quaternary structure, heterotetramer of two alpha and two beta subunits. Requires Mg(2+) as cofactor.

It catalyses the reaction succinate + ATP + CoA = succinyl-CoA + ADP + phosphate. The catalysed reaction is GTP + succinate + CoA = succinyl-CoA + GDP + phosphate. Its pathway is carbohydrate metabolism; tricarboxylic acid cycle; succinate from succinyl-CoA (ligase route): step 1/1. Succinyl-CoA synthetase functions in the citric acid cycle (TCA), coupling the hydrolysis of succinyl-CoA to the synthesis of either ATP or GTP and thus represents the only step of substrate-level phosphorylation in the TCA. The beta subunit provides nucleotide specificity of the enzyme and binds the substrate succinate, while the binding sites for coenzyme A and phosphate are found in the alpha subunit. The sequence is that of Succinate--CoA ligase [ADP-forming] subunit beta from Pseudomonas syringae pv. syringae (strain B728a).